The sequence spans 367 residues: Viral cathepsin (367 aa).

The signal sequence occupies residues 1–25; the sequence is MRKYHSNIMHKIITFVSLLWTFVVC. A propeptide spans 26 to 156 (activation peptide); it reads DEISLHTSSS…IVKGAPDIRL (131 aa). N-linked (GlcNAc...) asparagine; by host glycosylation is found at Asn-103 and Asn-135. 3 cysteine pairs are disulfide-bonded: Cys-177–Cys-218, Cys-211–Cys-251, and Cys-306–Cys-354. Cys-180 is a catalytic residue. Active-site residues include His-313 and Asn-333.

Belongs to the peptidase C1 family. Synthesized as an inactive proenzyme and activated by proteolytic removal of the inhibitory propeptide.

The catalysed reaction is Endopeptidase of broad specificity, hydrolyzing substrates of both cathepsin L and cathepsin B.. Functionally, cysteine protease that plays an essential role in host liquefaction to facilitate horizontal transmission of the virus. May participate in the degradation of foreign protein expressed by the baculovirus system. This Lepidoptera (butterflies and moths) protein is Viral cathepsin (VCATH).